The chain runs to 188 residues: dTTP/UTP pyrophosphatase (188 aa).

The Proton acceptor role is filled by aspartate 70.

Belongs to the Maf family. YhdE subfamily. A divalent metal cation is required as a cofactor.

Its subcellular location is the cytoplasm. The enzyme catalyses dTTP + H2O = dTMP + diphosphate + H(+). The catalysed reaction is UTP + H2O = UMP + diphosphate + H(+). Its function is as follows. Nucleoside triphosphate pyrophosphatase that hydrolyzes dTTP and UTP. May have a dual role in cell division arrest and in preventing the incorporation of modified nucleotides into cellular nucleic acids. The sequence is that of dTTP/UTP pyrophosphatase from Clostridium botulinum (strain Alaska E43 / Type E3).